Consider the following 201-residue polypeptide: UPF0301 protein Rleg2_0617 (201 aa).

Belongs to the UPF0301 (AlgH) family.

In Rhizobium leguminosarum bv. trifolii (strain WSM2304), this protein is UPF0301 protein Rleg2_0617.